The sequence spans 151 residues: Non-specific lipid transfer protein GPI-anchored 30 (151 aa).

An N-terminal signal peptide occupies residues 1-22 (MMMGMKFFSFYVVLLLVAASSG). 4 disulfide bridges follow: C32–C69, C39–C53, C54–C97, and C67–C106. The N-linked (GlcNAc...) asparagine glycan is linked to N44. S120 carries GPI-anchor amidated serine lipidation. Residues 121-151 (SSIGNTFSQSYWMTTLAIAATVLSYCHHIIS) constitute a propeptide, removed in mature form.

Belongs to the plant LTP family. Expressed in vascular tissues of all organs. Expressed in seedlings, preferentially in hypocotyls and roots. Also observed in siliques.

Its subcellular location is the cell membrane. In terms of biological role, lipid transfer protein that promotes the number of phloem (pro)cambial and pericycle cells. This chain is Non-specific lipid transfer protein GPI-anchored 30, found in Arabidopsis thaliana (Mouse-ear cress).